Here is a 1399-residue protein sequence, read N- to C-terminus: DNA-directed RNA polymerase subunit beta' (1399 aa).

Residues Cys-70, Cys-72, Cys-85, and Cys-88 each contribute to the Zn(2+) site. 3 residues coordinate Mg(2+): Asp-460, Asp-462, and Asp-464. Zn(2+) contacts are provided by Cys-814, Cys-888, Cys-895, and Cys-898.

The protein belongs to the RNA polymerase beta' chain family. The RNAP catalytic core consists of 2 alpha, 1 beta, 1 beta' and 1 omega subunit. When a sigma factor is associated with the core the holoenzyme is formed, which can initiate transcription. Mg(2+) is required as a cofactor. Zn(2+) serves as cofactor.

It carries out the reaction RNA(n) + a ribonucleoside 5'-triphosphate = RNA(n+1) + diphosphate. Its function is as follows. DNA-dependent RNA polymerase catalyzes the transcription of DNA into RNA using the four ribonucleoside triphosphates as substrates. The sequence is that of DNA-directed RNA polymerase subunit beta' from Pseudomonas putida (strain ATCC 47054 / DSM 6125 / CFBP 8728 / NCIMB 11950 / KT2440).